The chain runs to 244 residues: Nodulation protein G (244 aa).

Position 11–35 (11–35 (VTGASGAIGGAIARVLHAQGAIVGL)) interacts with NAD(+). Ser-139 serves as a coordination point for substrate. Tyr-152 (proton acceptor) is an active-site residue.

The protein belongs to the short-chain dehydrogenases/reductases (SDR) family.

Proposed to modify Nod factor fatty acyl chain. The chain is Nodulation protein G (nodG) from Rhizobium meliloti (Ensifer meliloti).